We begin with the raw amino-acid sequence, 482 residues long: Membrane-bound lytic murein transglycosylase F (482 aa).

The signal sequence occupies residues 1-18; sequence MKGLFIRIVLAICLSLWA. The tract at residues 19 to 266 is non-LT domain; sequence IDMVFPWQQI…RIEEKYFNHL (248 aa). An LT domain region spans residues 267 to 482; sequence NQFDYVDTRS…ISTQTQQEQR (216 aa). Residue Glu-311 is part of the active site.

The protein in the N-terminal section; belongs to the bacterial solute-binding protein 3 family. This sequence in the C-terminal section; belongs to the transglycosylase Slt family.

Its subcellular location is the cell outer membrane. The enzyme catalyses Exolytic cleavage of the (1-&gt;4)-beta-glycosidic linkage between N-acetylmuramic acid (MurNAc) and N-acetylglucosamine (GlcNAc) residues in peptidoglycan, from either the reducing or the non-reducing ends of the peptidoglycan chains, with concomitant formation of a 1,6-anhydrobond in the MurNAc residue.. Its function is as follows. Murein-degrading enzyme that degrades murein glycan strands and insoluble, high-molecular weight murein sacculi, with the concomitant formation of a 1,6-anhydromuramoyl product. Lytic transglycosylases (LTs) play an integral role in the metabolism of the peptidoglycan (PG) sacculus. Their lytic action creates space within the PG sacculus to allow for its expansion as well as for the insertion of various structures such as secretion systems and flagella. This is Membrane-bound lytic murein transglycosylase F from Histophilus somni (strain 129Pt) (Haemophilus somnus).